The chain runs to 660 residues: Histone deacetylase 5 (660 aa).

An N-acetylalanine modification is found at Ala-2. Residues 26–349 (KVGLIYDETM…SLACVQVLLE (324 aa)) are histone deacetylase. His-158 acts as the Proton donor/acceptor in catalysis. Zn(2+)-binding residues include Asp-198, His-200, and Asp-291.

This sequence belongs to the histone deacetylase family. HD type 2 subfamily. In terms of assembly, interacts with HDA6. Zn(2+) is required as a cofactor. In terms of tissue distribution, expressed in stems, leaves, flowers, siliques and mature seeds.

The protein localises to the nucleus. The protein resides in the cytoplasm. It carries out the reaction N(6)-acetyl-L-lysyl-[histone] + H2O = L-lysyl-[histone] + acetate. Inhibited by trichostatin A (TSA), a well-known histone deacetylase inhibitor. In terms of biological role, responsible for the deacetylation of lysine residues on the N-terminal part of the core histones (H2A, H2B, H3 and H4). Histone deacetylation gives a tag for epigenetic repression and plays an important role in transcriptional regulation, cell cycle progression and developmental events. Histone deacetylases act via the formation of large multiprotein complexes. Involved in the regulation of flowering time by repressing FLC and AGL27/MAF1 expression. Forms a histone deacetylase complex with HDA6, FLD and MSI4/FVE that represses FLC gene expression to control flowering time. Unlike its tandem duplication HDA18, HDA5 does not seem to be required for the cellular patterning in the root epidermis. The polypeptide is Histone deacetylase 5 (Arabidopsis thaliana (Mouse-ear cress)).